We begin with the raw amino-acid sequence, 358 residues long: Anhydro-N-acetylmuramic acid kinase (358 aa).

Glycine 9 to aspartate 16 provides a ligand contact to ATP.

The protein belongs to the anhydro-N-acetylmuramic acid kinase family.

It carries out the reaction 1,6-anhydro-N-acetyl-beta-muramate + ATP + H2O = N-acetyl-D-muramate 6-phosphate + ADP + H(+). It functions in the pathway amino-sugar metabolism; 1,6-anhydro-N-acetylmuramate degradation. Its pathway is cell wall biogenesis; peptidoglycan recycling. Catalyzes the specific phosphorylation of 1,6-anhydro-N-acetylmuramic acid (anhMurNAc) with the simultaneous cleavage of the 1,6-anhydro ring, generating MurNAc-6-P. Is required for the utilization of anhMurNAc either imported from the medium or derived from its own cell wall murein, and thus plays a role in cell wall recycling. The chain is Anhydro-N-acetylmuramic acid kinase from Acidiphilium cryptum (strain JF-5).